A 213-amino-acid chain; its full sequence is MGITMDEEVIFETPRELISIKRIKDIPRSKDTHVFAACITSDGYPLIGARRTSFAFQAILSQQNSDSIFRVSTKLLRFMYYNELREIFRRLRKGSINNIDPHFEELILLGGKLDKKESIKDCLRRELKEESDERITVKEFGNVILKLTTRDKLFNKVYIGYCMACFINQSLEDLSHTSIYNVEIRKIKSLNDCINDDKYEYLSYIYNMLVNSK.

The N(7)-methyl-GTP site is built by Glu16 and Arg50. One can recognise a Nudix hydrolase domain in the interval 30-209 (KDTHVFAACI…EYLSYIYNML (180 aa)). The Nudix box motif lies at 111-132 (GKLDKKESIKDCLRRELKEESD). Catalysis depends on Glu126, which acts as the Nucleophile. Residues Glu126 and Glu130 each coordinate Mg(2+). Position 151 (Asp151) interacts with N(7)-methyl-GTP. Residue Glu183 coordinates Mg(2+).

Belongs to the Nudix hydrolase family. Mg(2+) serves as cofactor. Requires Mn(2+) as cofactor.

The enzyme catalyses a 5'-end (N(7)-methyl 5'-triphosphoguanosine)-guanosine in mRNA + H2O = a 5'-end phospho-guanosine in mRNA + N(7)-methyl-GDP + 2 H(+). Decapping enzyme that remove the protective 5'-cap from both host and viral mRNAs to commit transcripts for decay by the cellular exonuclease XRN1. Accelerates viral and cellular mRNA turnover to eliminate competing host mRNAs and allow stage-specific synthesis of viral proteins. Acceleration of the turnover of cellular transcripts may even promote the shutoff of host protein synthesis. The chain is mRNA-decapping protein OPG121 (OPG121) from Vaccinia virus (strain Western Reserve) (VACV).